We begin with the raw amino-acid sequence, 263 residues long: Cell division coordinator CpoB (263 aa).

A signal peptide spans 1–26 (MSSNFRHQLLSLSLLVGIAAPWAAFA). The stretch at 44–88 (QLERISNAHSQLLTQLQQQLSDNQSDIDSLRGQIQENQYQLNQVV) forms a coiled coil. Residues 106-123 (AAAQSTSGDQSGAAASTT) are compositionally biased toward low complexity. Residues 106–139 (AAAQSTSGDQSGAAASTTPTADAGTANAGAPVKS) form a disordered region. 3 TPR repeats span residues 143 to 176 (NTDYNAAIALVQDKSRQDDAMVAFQNFIKNYPDS), 180 to 213 (PNANYWLGQLNYNKGKKDDAAYYFASVVKNYPKS), and 217 to 250 (ADAMFKVGVIMQDKGDTAKAKAVYQQVISKYPGT).

The protein belongs to the CpoB family. Homotrimer. Interacts directly with the central domain of TolA and with PBP1B. Binding to TolA disrupts the homotrimer to form a YbgF/TolA heterodimer with weak affinity. Forms a quaternary complex with PBP1B-LpoB and TolA.

It is found in the periplasm. Mediates coordination of peptidoglycan synthesis and outer membrane constriction during cell division. Promotes physical and functional coordination of the PBP1B-LpoB and Tol machines, and regulates PBP1B activity in response to Tol energy state. The chain is Cell division coordinator CpoB from Escherichia coli (strain K12).